The sequence spans 2087 residues: METESESSTLGDDSVFWLESEVIIQVTDCEEEEREEKFRKMKSSVHSEEDDFVPELHRNVHPRERPDWEETLSAMARGADVPEIPGDLTLKTCGSTASMKVKHVKKLPFTKGHFPKMAECAHFHYENVEFGSIQLSLSEEQNEVMKNGCESKELVYLVQIACQGKSWIVKRSYEDFRVLDKHLHLCIYDRRFSQLSELPRSDTLKDSPESVTQMLMAYLSRLSAIAGNKINCGPALTWMEIDNKGNHLLVHEESSINTPAVGAAHVIKRYTARAPDELTLEVGDIVSVIDMPPKVLSTWWRGKHGFQVGLFPGHCVELINQKVPQSVTNSVPKPVSKKHGKLITFLRTFMKSRPTKQKLKQRGILKERVFGCDLGEHLLNSGFEVPQVLQSCTAFIERYGIVDGIYRLSGVASNIQRLRHEFDSEHVPDLTKEPYVQDIHSVGSLCKLYFRELPNPLLTYQLYEKFSDAVSAATDEERLIKIHDVIQQLPPPHYRTLEFLMRHLSLLADYCSITNMHAKNLAIVWAPNLLRSKQIESACFSGTAAFMEVRIQSVVVEFILNHVDVLFSGRISMAMQEGAASLSRPKSLLVSSPSTKLLTLEEAQARTQAQVNSPIVTENKYIEVGEGPAALQGKFHTIIEFPLERKRPQNKMKKSPVGSWRSFFNLGKSSSVSKRKLQRNESEPSEMKAMALKGGRAEGTLRSAKSEESLTSLHAVDGDSKLFRPRRPRSSSDALSASFNGEMLGNRCNSYDNLPHDNESEEEGGLLHIPALMSPHSAEDVDLSPPDIGVASLDFDPMSFQCSPPKAESECLESGASFLDSPGYSKDKPSANKKDAETGSSQCQTPGSTASSEPVSPLQEKLSPFFTLDLSPTEDKSSKPSSFTEKVVYAFSPKIGRKLSKSPSMSISEPISVTLPPRVSEVIGTVSNTTAQNASSSTWDKCVEERDATNRSPTQIVKMKTNETVAQEAYESEVQPLDQVAAEEVELPGKEDQSVSSSQSKAVASGQTQTGAVTHDPPQDSVPVSSVSLIPPPPPPKNVARMLALALAESAQQASTQSLKRPGTSQAGYTNYGDIAVATTEDNLSSSYSAVALDKAYFQTDRPAEQFHLQNNAPGNCDHPLPETTATGDPTHSNTTESGEQHHQVDLTGNQPHQAYLSGDPEKARITSVPLDSEKSDDHVSFPEDQSGKNSMPTVSFLDQDQSPPRFYSGDQPPSYLGASVDKLHHPLEFADKSPTPPNLPSDKIYPPSGSPEENTSTATMTYMTTTPATAQMSTKEASWDVAEQPTTADFAAATLQRTHRTNRPLPPPPSQRSAEQPPVVGQVQAATNIGLNNSHKVQGVVPVPERPPEPRAMDDPASAFISDSGAAAAQCPMATAVQPGLPEKVRDGARVPLLHLRAESVPAHPCGFPAPLPPTRMMESKMIAAIHSSSADATSSSNYHSFVTASSTSVDDALPLPLPVPQPKHASQKTVYSSFARPDVTTEPFGPDNCLHFNMTPNCQYRPQSVPPHHNKLEQHQVYGARSEPPASMGLRYNTYVAPGRNASGHHSKPCSRVEYVSSLSSSVRNTCYPEDIPPYPTIRRVQSLHAPPSSMIRSVPISRTEVPPDDEPAYCPRPLYQYKPYQSSQARSDYHVTQLQPYFENGRVHYRYSPYSSSSSSYYSPDGALCDVDAYGTVQLRPLHRLPNRDFAFYNPRLQGKSLYSYAGLAPRPRANVTGYFSPNDHNVVSMPPAADVKHTYTSWDLEDMEKYRMQSIRRESRARQKVKGPVMSQYDNMTPAVQDDLGGIYVIHLRSKSDPGKTGLLSVAEGKESRHAAKAISPEGEDRFYRRHPEAEMDRAHHHGGHGSTQPEKPSLPQKQSSLRSRKLPDMGCSLPEHRAHQEASHRQFCESKNGPPYPQGAGQLDYGSKGIPDTSEPVSYHNSGVKYAASGQESLRLNHKEVRLSKEMERPWVRQPSAPEKHSRDCYKEEEHLTQSIVPPPKPERSHSLKLHHTQNVERDPSVLYQYQPHGKRQSSVTVVSQYDNLEDYHSLPQHQRGVFGGGGMGTYVPPGFPHPQSRTYATALGQGAFLPAELSLQHPETQIHAE.

Positions 131–245 (GSIQLSLSEE…LTWMEIDNKG (115 aa)) constitute a PX; atypical domain. Residues 259 to 321 (PAVGAAHVIK…PGHCVELINQ (63 aa)) enclose the SH3 domain. One can recognise a Rho-GAP domain in the interval 372–567 (CDLGEHLLNS…FILNHVDVLF (196 aa)). Residues Ser706, Ser709, Ser732, and Ser738 each carry the phosphoserine modification. Positions 818–858 (FLDSPGYSKDKPSANKKDAETGSSQCQTPGSTASSEPVSPL) are disordered. Residues 825 to 837 (SKDKPSANKKDAE) show a composition bias toward basic and acidic residues. A compositionally biased stretch (polar residues) spans 838-854 (TGSSQCQTPGSTASSEP). Residues Ser852, Ser856, and Ser892 each carry the phosphoserine modification. Over residues 927–938 (SNTTAQNASSST) the composition is skewed to low complexity. Disordered stretches follow at residues 927 to 1038 (SNTT…PPKN), 1103 to 1143 (PAEQ…EQHH), and 1169 to 1257 (VPLD…ENTS). Position 952 is a phosphoserine (Ser952). Low complexity-rich tracts occupy residues 994–1005 (SVSSSQSKAVAS) and 1019–1029 (QDSVPVSSVSL). Residues 1124–1138 (TTATGDPTHSNTTES) show a composition bias toward polar residues. Over residues 1172–1182 (DSEKSDDHVSF) the composition is skewed to basic and acidic residues. Over residues 1188 to 1203 (GKNSMPTVSFLDQDQS) the composition is skewed to polar residues. Residue Ser1203 is modified to Phosphoserine. The segment covering 1222–1232 (DKLHHPLEFAD) has biased composition (basic and acidic residues). Residues 1391 to 1711 (RVPLLHLRAE…YSYAGLAPRP (321 aa)) form an interaction with GAB2 region. Asymmetric dimethylarginine is present on residues Arg1523 and Arg1533. Ser1585 carries the phosphoserine modification. Residues 1685–2087 (PNRDFAFYNP…QHPETQIHAE (403 aa)) are interaction with FYN. The segment at 1798–1896 (PGKTGLLSVA…QFCESKNGPP (99 aa)) is disordered. Basic and acidic residues predominate over residues 1823–1838 (GEDRFYRRHPEAEMDR). Over residues 1847–1862 (STQPEKPSLPQKQSSL) the composition is skewed to polar residues. Positions 1875 to 1889 (PEHRAHQEASHRQFC) are enriched in basic and acidic residues. Omega-N-methylarginine is present on Arg2037.

This sequence belongs to the PX domain-containing GAP family. Interacts with NTRK1 (via cytoplasmic domain); the interaction is independent of the phosphorylation state of NTRK1. Interacts with SHC3 (via SH2 domain). Interacts with RASA1 (via SH3 domain); the interaction is necessary for the Ras activation and cell transforming activities of ARHGAP32. Interacts with GAB1 and GAB2. Interacts with CRK and CRKL. Found in a complex with CRKL and BCAR1; upon EGF stimulation BCAR1 may be replaced by EGFR. Interacts with NCK1 (via SH3 domain); NCK1 recruits phosphorylated BCAR1 to the complex. Isoform 2 interacts with FYN; the interaction appears to be dependent on tyrosine phosphorylation of ARHGAP32. Interacts with EGFR; the interaction requires EGF stimulation and is increased by SHC3. Interacts with CDC42; the interaction requires constitutively active CDC42. Interacts with CTNNB1. Interacts with GRIN2B. Interacts with DLG4 and CDH2. Interacts with GPHN. In terms of processing, isoform 2 is phosphorylated on multiple tyrosine residues by FYN. Phosphorylated tyrosine residues undergo dephosphorylation after stimulation of NMDA receptors. Phosphorylated in vitro by CaMK2 in the presence of calmodulin and calcium; which inhibits GAP activity. As to expression, isoform 1 and isoform 2 are highly expressed in brain and testis. Isoform 1 is also expressed in other tissues such as lung, liver and spleen.

The protein resides in the postsynaptic density. It localises to the cell projection. It is found in the dendritic spine. Its subcellular location is the cytoplasm. The protein localises to the cell cortex. The protein resides in the endosome membrane. It localises to the golgi apparatus membrane. It is found in the endoplasmic reticulum membrane. Its subcellular location is the membrane. Its function is as follows. GTPase-activating protein (GAP) promoting GTP hydrolysis on RHOA, CDC42 and RAC1 small GTPases. May be involved in the differentiation of neuronal cells during the formation of neurite extensions. Involved in NMDA receptor activity-dependent actin reorganization in dendritic spines. May mediate cross-talks between Ras- and Rho-regulated signaling pathways in cell growth regulation. Isoform 2 has higher GAP activity. The protein is Rho GTPase-activating protein 32 (ARHGAP32) of Homo sapiens (Human).